The sequence spans 395 residues: GPI-anchor transamidase (395 aa).

The N-terminal stretch at 1–27 (MVGTWFLCRGFTTLAGLLLLPFGSLAA) is a signal peptide. At 28–368 (SQIEDQAEQF…PKLKDWHPPG (341 aa)) the chain is on the lumenal side. Ca(2+) is bound by residues Asp-79, Ile-82, Glu-118, and Asp-120. His-164 functions as the Proton donor in the catalytic mechanism. Residue Cys-206 is the Nucleophile; acyl-thioester intermediate of the active site. A protein is bound by residues Cys-206, Ser-232, and Ser-234. The segment at 231–236 (DSLSHQ) is autoinhibitory loop. A disulfide bond links Cys-275 and Cys-280. A helical transmembrane segment spans residues 369 to 385 (GFILGLWALIIMVFFKT). The Cytoplasmic segment spans residues 386–395 (YGIKHMKFIF).

It belongs to the peptidase C13 family. Heteropentamer. Part of the GPI-anchor transamidase complex, consisting of PIGK, PIGT, PIGS, PIGU and GAA1. Interacts with GPAA1. Interacts with PIGT; this interaction, via a disulfide link, stabilizes the expression of GAA1 and PIGK and links them to PIGS. Post-translationally, the disulfide bond between PIGK/GPI8 and PIGT is important for normal enzyme activity.

The protein localises to the endoplasmic reticulum membrane. It functions in the pathway glycolipid biosynthesis; glycosylphosphatidylinositol-anchor biosynthesis. With respect to regulation, in the absence of proproteins substrates, exists in an inactive state with a disrupted catalytic site by an autoinhibitory loop. The binding of proprotein substrates, particularly the CSP region, to GPI-T triggers concerted conformational changes that alleviate the inhibition by the autoinhibitory loop. Meanwhile, proprotein residues near the omega- site induce the formation of a catalytic cleft for catalysis, following which the products are released and GPI-T reverts to the inactive state. Catalytic subunit of the glycosylphosphatidylinositol-anchor (GPI-anchor) transamidase (GPI-T) complex that catalyzes the formation of the linkage between a proprotein and a GPI-anchor and participates in GPI anchored protein biosynthesis. Recognizes diverse proproteins at a C-terminal signal peptide (CSP) region that lacks consensus sequence and replaces it with a GPI-anchor via a transamidation reaction. Transamidation catalysis reaction follows a two-phase mechanism. In the acyl-enzyme phase, the carbonyl group of the proproteins's omega-site undergoes a nucleophilic attack forming an enzyme-substrate thioester bond. Followed by a general acid catalysis that allows CSP releasing, regenerating the carbonyl, and forming the acyl-enzyme intermediate. In the GPI-anchor attachment phase, the amino group of the GPI-anchor's ethanolamine phosphate, the one on third mannose (EtNP3), mediates a nucleophilic attack on the carbonyl of the acyl-enzyme intermediate, replacing the CSP, allowing GPI-anchor attachment to the omega-residue, therefore forming the product and freeing the enzyme. This is GPI-anchor transamidase from Sus scrofa (Pig).